The primary structure comprises 572 residues: Proline--tRNA ligase (572 aa).

This sequence belongs to the class-II aminoacyl-tRNA synthetase family. ProS type 1 subfamily. In terms of assembly, homodimer.

Its subcellular location is the cytoplasm. It carries out the reaction tRNA(Pro) + L-proline + ATP = L-prolyl-tRNA(Pro) + AMP + diphosphate. In terms of biological role, catalyzes the attachment of proline to tRNA(Pro) in a two-step reaction: proline is first activated by ATP to form Pro-AMP and then transferred to the acceptor end of tRNA(Pro). As ProRS can inadvertently accommodate and process non-cognate amino acids such as alanine and cysteine, to avoid such errors it has two additional distinct editing activities against alanine. One activity is designated as 'pretransfer' editing and involves the tRNA(Pro)-independent hydrolysis of activated Ala-AMP. The other activity is designated 'posttransfer' editing and involves deacylation of mischarged Ala-tRNA(Pro). The misacylated Cys-tRNA(Pro) is not edited by ProRS. This Bacillus licheniformis (strain ATCC 14580 / DSM 13 / JCM 2505 / CCUG 7422 / NBRC 12200 / NCIMB 9375 / NCTC 10341 / NRRL NRS-1264 / Gibson 46) protein is Proline--tRNA ligase.